We begin with the raw amino-acid sequence, 528 residues long: Low affinity inorganic phosphate transporter 4 (528 aa).

The Cytoplasmic segment spans residues 1-18; sequence MGLEVLEALDSARTQWYH. Residues 19-39 form a helical membrane-spanning segment; sequence VTAIVIAGMGFFTDAYDLFCI. Topologically, residues 40–68 are extracellular; the sequence is STVSKLLGRLYYFDPSTNKPGKLPPSVNN. A helical transmembrane segment spans residues 69–89; sequence VVTGVALVGTLSGQLVFGWLG. Over 90–96 the chain is Cytoplasmic; that stretch reads DKLGRKK. A helical membrane pass occupies residues 97 to 117; sequence VYGVTLIIMVACAICSGLSFG. At 118–122 the chain is on the extracellular side; the sequence is SSAKS. The helical transmembrane segment at 123-143 threads the bilayer; sequence VMITLCFFRFWLGFGIGGDYP. Topologically, residues 144–158 are cytoplasmic; sequence LSATIMSEYANKRTR. The helical transmembrane segment at 159 to 179 threads the bilayer; that stretch reads GAFIAAVFAMQGVGIIFAGLV. The Extracellular portion of the chain corresponds to 180–208; sequence SMVFSGIFKAYYQAPRFNEDPILSTQPEG. The helical transmembrane segment at 209–229 threads the bilayer; it reads DLLWRLILMIGAVPAAMTYYW. Over 230–292 the chain is Cytoplasmic; that stretch reads RMKMPETGRY…SEFFNRHGRH (63 aa). A helical membrane pass occupies residues 293–313; that stretch reads LIGTMSCWFLLDIAFYSQNLT. Over 314–341 the chain is Extracellular; that stretch reads QKDIYPAMGLIRQDKEMNAIDEVFQTSR. The chain crosses the membrane as a helical span at residues 342-362; it reads AMFVVALFGTFPGYWFTVFFI. Residues 363 to 371 are Cytoplasmic-facing; that stretch reads EKLGRFKIQ. Residues 372-392 form a helical membrane-spanning segment; that stretch reads LVGFFMMSFFMFVIGVKYEYL. Over 393–401 the chain is Extracellular; sequence KDENKNLFA. Residues 402–422 form a helical membrane-spanning segment; that stretch reads LLYGLTFFFANFGPNSTTFVL. Over 423–433 the chain is Cytoplasmic; the sequence is PAELFPTRVRS. The helical transmembrane segment at 434–454 threads the bilayer; the sequence is TCHAFSAASGKAGAMVGAFGI. Topologically, residues 455–468 are extracellular; the sequence is QYYTLDGTPRKIRR. Residues 469–489 traverse the membrane as a helical segment; sequence AMMILAFTNLIGFFCTFLVTE. Residues 490–528 lie on the Cytoplasmic side of the membrane; sequence TKGRSLEEISGEDGRESELTATPNDRAPGIRQDSRTEKM. Positions 497–507 are enriched in basic and acidic residues; it reads EISGEDGRESE. A disordered region spans residues 497-528; the sequence is EISGEDGRESELTATPNDRAPGIRQDSRTEKM.

Belongs to the major facilitator superfamily. Phosphate:H(+) symporter (TC 2.A.1.9) family. In terms of tissue distribution, mostly expressed in mycorrhizal roots. Also observed in root tips of non-mycorrhizal roots, in a phosphate (Pi) depended-manner, highest expression levels being observed in low Pi conditions.

The protein localises to the cell membrane. The catalysed reaction is phosphate(in) + H(+)(in) = phosphate(out) + H(+)(out). Low-affinity transporter for external inorganic phosphate (Pi) probably involved in the acquisition of phosphate released by arbuscular mycorrhizal (AM) fungi (e.g. Gigaspora gigantea, Glomus versiforme and G.intraradices) during AM symbiosis; required for propper mycorrhizal arbuscule morphology. Acts as a Pi-sensing machinery at the root tip level, independently of AM fungi, involved in the regulation of early root branching and lateral roots formation. The protein is Low affinity inorganic phosphate transporter 4 of Medicago truncatula (Barrel medic).